The primary structure comprises 251 residues: Malonyl-[acyl-carrier protein] O-methyltransferase (251 aa).

The protein belongs to the methyltransferase superfamily.

The enzyme catalyses malonyl-[ACP] + S-adenosyl-L-methionine = malonyl-[ACP] methyl ester + S-adenosyl-L-homocysteine. Its pathway is cofactor biosynthesis; biotin biosynthesis. Its function is as follows. Converts the free carboxyl group of a malonyl-thioester to its methyl ester by transfer of a methyl group from S-adenosyl-L-methionine (SAM). It allows to synthesize pimeloyl-ACP via the fatty acid synthetic pathway. This is Malonyl-[acyl-carrier protein] O-methyltransferase from Enterobacter lignolyticus (strain SCF1).